A 185-amino-acid polypeptide reads, in one-letter code: Ribosome-recycling factor (185 aa).

The protein belongs to the RRF family.

The protein resides in the cytoplasm. Functionally, responsible for the release of ribosomes from messenger RNA at the termination of protein biosynthesis. May increase the efficiency of translation by recycling ribosomes from one round of translation to another. The sequence is that of Ribosome-recycling factor from Buchnera aphidicola subsp. Acyrthosiphon pisum (strain APS) (Acyrthosiphon pisum symbiotic bacterium).